We begin with the raw amino-acid sequence, 320 residues long: Glucosaminate ammonia-lyase (320 aa).

36-43 (TGMQAGGQ) contributes to the FAD binding site. A disulfide bridge connects residues Cys-136 and Cys-139. 285–294 (DVADHVYRQA) is an FAD binding site.

The protein belongs to the class-II pyridine nucleotide-disulfide oxidoreductase family.

The enzyme catalyses 2-amino-2-deoxy-D-gluconate = 2-dehydro-3-deoxy-D-gluconate + NH4(+). Its function is as follows. Catalyzes the conversion of 2-amino-2-deoxy-D-gluconate (GlcNA) to 2-keto-3-deoxy-D-gluconic acid (KDGA) and ammonia. The sequence is that of Glucosaminate ammonia-lyase from Pseudomonas fluorescens.